Here is a 173-residue protein sequence, read N- to C-terminus: MSRQSPSYADCVCSLRTSLAFLESSVATLDNGVQDFPRLCHVLRTVRHYELIPQTTLAAAEASLRDEIGPFIQLLLDRAEKHLDRQARRIETLKARAELNAGRLSQYSGDGHNNGKFSGQGMDFRKSRPLNGEAALRAKVVRQRKEALKYSVERLEMEVRQKERELKLRLEQA.

Belongs to the DASH complex SPC19 family. As to quaternary structure, component of the DASH complex consisting of ASK1, DAD1, DAD2, DAD3, DAD4, DAM1, DUO1, HSK3, SPC19 and SPC34, with a stoichiometry of one copy of each subunit per complex. Multiple DASH complexes oligomerize to form a ring that encircles spindle microtubules and organizes the rod-like NDC80 complexes of the outer kinetochore. DASH complex oligomerization strengthens microtubule attachments. On cytoplasmic microtubules, DASH complexes appear to form patches instead of rings.

It localises to the nucleus. Its subcellular location is the cytoplasm. The protein localises to the cytoskeleton. It is found in the spindle. The protein resides in the chromosome. It localises to the centromere. Its subcellular location is the kinetochore. Component of the DASH complex that connects microtubules with kinetochores and couples microtubule depolymerisation to chromosome movement; it is involved in retrieving kinetochores to the spindle poles before their re-orientation on the spindle in early mitosis and allows microtubule depolymerization to pull chromosomes apart and resist detachment during anaphase. Kinetochores, consisting of a centromere-associated inner segment and a microtubule-contacting outer segment, play a crucial role in chromosome segregation by mediating the physical connection between centromeric DNA and microtubules. Kinetochores also serve as an input point for the spindle assembly checkpoint, which delays anaphase until all chromosomes have bioriented on the mitotic spindle. The polypeptide is DASH complex subunit SPC19 (Chaetomium thermophilum (strain DSM 1495 / CBS 144.50 / IMI 039719) (Thermochaetoides thermophila)).